The sequence spans 303 residues: tRNA dimethylallyltransferase (303 aa).

9-16 (GPTASGKS) contacts ATP. 11–16 (TASGKS) is a substrate binding site. An interaction with substrate tRNA region spans residues 34-37 (DSKQ).

This sequence belongs to the IPP transferase family. Monomer. Requires Mg(2+) as cofactor.

The enzyme catalyses adenosine(37) in tRNA + dimethylallyl diphosphate = N(6)-dimethylallyladenosine(37) in tRNA + diphosphate. Its function is as follows. Catalyzes the transfer of a dimethylallyl group onto the adenine at position 37 in tRNAs that read codons beginning with uridine, leading to the formation of N6-(dimethylallyl)adenosine (i(6)A). This Ehrlichia chaffeensis (strain ATCC CRL-10679 / Arkansas) protein is tRNA dimethylallyltransferase.